The primary structure comprises 302 residues: Sulfate adenylyltransferase subunit 2 (302 aa).

It belongs to the PAPS reductase family. CysD subfamily. As to quaternary structure, heterodimer composed of CysD, the smaller subunit, and CysN.

The enzyme catalyses sulfate + ATP + H(+) = adenosine 5'-phosphosulfate + diphosphate. It functions in the pathway sulfur metabolism; hydrogen sulfide biosynthesis; sulfite from sulfate: step 1/3. Functionally, with CysN forms the ATP sulfurylase (ATPS) that catalyzes the adenylation of sulfate producing adenosine 5'-phosphosulfate (APS) and diphosphate, the first enzymatic step in sulfur assimilation pathway. APS synthesis involves the formation of a high-energy phosphoric-sulfuric acid anhydride bond driven by GTP hydrolysis by CysN coupled to ATP hydrolysis by CysD. The chain is Sulfate adenylyltransferase subunit 2 from Shigella dysenteriae serotype 1 (strain Sd197).